Consider the following 356-residue polypeptide: UDP-N-acetylglucosamine--N-acetylmuramyl-(pentapeptide) pyrophosphoryl-undecaprenol N-acetylglucosamine transferase (356 aa).

UDP-N-acetyl-alpha-D-glucosamine-binding residues include Arg166, Ser196, and Gln290.

Belongs to the glycosyltransferase 28 family. MurG subfamily.

The protein localises to the cell membrane. The catalysed reaction is Mur2Ac(oyl-L-Ala-gamma-D-Glu-L-Lys-D-Ala-D-Ala)-di-trans,octa-cis-undecaprenyl diphosphate + UDP-N-acetyl-alpha-D-glucosamine = beta-D-GlcNAc-(1-&gt;4)-Mur2Ac(oyl-L-Ala-gamma-D-Glu-L-Lys-D-Ala-D-Ala)-di-trans,octa-cis-undecaprenyl diphosphate + UDP + H(+). It participates in cell wall biogenesis; peptidoglycan biosynthesis. Its function is as follows. Cell wall formation. Catalyzes the transfer of a GlcNAc subunit on undecaprenyl-pyrophosphoryl-MurNAc-pentapeptide (lipid intermediate I) to form undecaprenyl-pyrophosphoryl-MurNAc-(pentapeptide)GlcNAc (lipid intermediate II). The protein is UDP-N-acetylglucosamine--N-acetylmuramyl-(pentapeptide) pyrophosphoryl-undecaprenol N-acetylglucosamine transferase of Staphylococcus aureus (strain MW2).